A 102-amino-acid chain; its full sequence is Small ribosomal subunit protein bS18c (102 aa).

The protein belongs to the bacterial ribosomal protein bS18 family. As to quaternary structure, part of the 30S ribosomal subunit.

The protein localises to the plastid. It is found in the chloroplast. The protein is Small ribosomal subunit protein bS18c of Phaseolus vulgaris (Kidney bean).